Reading from the N-terminus, the 197-residue chain is MSEFLNTHNASILLSAVNKSHYPQDDLPEIALAGRSNVGKSSFINTLLGRKNLARTSSKPGKTQSLNFYNIDDKLRFVDVPGYGYAKVSKKERAKWGKMIEEYLTSRENLRAVVSLVDFRHDPSSDDVQMYDFLKYYEIPVILVATKADKVPRGKWNKQESAIKKKLDFDSNDAFIIFSSVDRTGLDTSWDAILESL.

The EngB-type G domain maps to 26-197; that stretch reads DLPEIALAGR…TSWDAILESL (172 aa). Residues 34 to 41, 61 to 65, 79 to 82, 146 to 149, and 178 to 180 contribute to the GTP site; these read GRSNVGKS, GKTQS, DVPG, TKAD, and FSS. The Mg(2+) site is built by S41 and T63.

The protein belongs to the TRAFAC class TrmE-Era-EngA-EngB-Septin-like GTPase superfamily. EngB GTPase family. The cofactor is Mg(2+).

Functionally, necessary for normal cell division and for the maintenance of normal septation. This is Probable GTP-binding protein EngB from Streptococcus mutans serotype c (strain ATCC 700610 / UA159).